A 156-amino-acid chain; its full sequence is Small ribosomal subunit protein uS7 (156 aa).

Belongs to the universal ribosomal protein uS7 family. Part of the 30S ribosomal subunit. Contacts proteins S9 and S11.

One of the primary rRNA binding proteins, it binds directly to 16S rRNA where it nucleates assembly of the head domain of the 30S subunit. Is located at the subunit interface close to the decoding center, probably blocks exit of the E-site tRNA. This is Small ribosomal subunit protein uS7 from Syntrophomonas wolfei subsp. wolfei (strain DSM 2245B / Goettingen).